Reading from the N-terminus, the 209-residue chain is MADFYYLPGSSPCRSVIMTAKAVGVELNKKLLNLQAGEHLKPEFLKINPQHTIPTLVDNGFALWESRAIQVYLVEKYGKTDSLYPKCPKKRAVINQRLYFDMGTLYQSFANYYYPQVFAKAPADPEAFKKIESAFEFLNTFLEGQEYAAGDSLTVADIALVASVSTFEVAGFEISKYANVNKWYENAKKVTPGWEENWAGCLEFKKYFE.

The region spanning 1–81 (MADFYYLPGS…YLVEKYGKTD (81 aa)) is the GST N-terminal domain. Glutathione is bound by residues Ser-10, 51–53 (HTI), and 65–67 (ESR). Residues 87–209 (CPKKRAVINQ…GCLEFKKYFE (123 aa)) form the GST C-terminal domain.

Belongs to the GST superfamily. Theta family. In terms of assembly, homodimer.

The catalysed reaction is RX + glutathione = an S-substituted glutathione + a halide anion + H(+). The enzyme catalyses 1,1,1-trichloro-2,2-bis(4-chlorophenyl)ethane = 1,1-dichloro-2,2-bis(4-chlorophenyl)ethylene + chloride + H(+). Conjugation of reduced glutathione to a wide number of exogenous and endogenous hydrophobic electrophiles. Has DDT dehydrochlorinase activity. The polypeptide is Glutathione S-transferase 1-1 (GstD1) (Drosophila simulans (Fruit fly)).